The following is a 437-amino-acid chain: Glutamate-1-semialdehyde 2,1-aminomutase (437 aa).

Residue lysine 273 is modified to N6-(pyridoxal phosphate)lysine.

This sequence belongs to the class-III pyridoxal-phosphate-dependent aminotransferase family. HemL subfamily. Homodimer. The cofactor is pyridoxal 5'-phosphate.

The protein localises to the cytoplasm. It carries out the reaction (S)-4-amino-5-oxopentanoate = 5-aminolevulinate. The protein operates within porphyrin-containing compound metabolism; protoporphyrin-IX biosynthesis; 5-aminolevulinate from L-glutamyl-tRNA(Glu): step 2/2. This is Glutamate-1-semialdehyde 2,1-aminomutase from Chlamydia abortus (strain DSM 27085 / S26/3) (Chlamydophila abortus).